We begin with the raw amino-acid sequence, 721 residues long: BRCA1-A complex subunit RAP80 (721 aa).

The segment at 1-65 is disordered; the sequence is MPRRKKKGKE…GLQKTKIKQS (65 aa). Residues 1–101 are necessary for transcriptional repression; the sequence is MPRRKKKGKE…SEQEAREVNS (101 aa). Lys20 participates in a covalent cross-link: Glycyl lysine isopeptide (Lys-Gly) (interchain with G-Cter in SUMO2). Ser29 carries the phosphoserine modification. Residue Lys31 forms a Glycyl lysine isopeptide (Lys-Gly) (interchain with G-Cter in SUMO2) linkage. A phosphoserine mark is found at Ser44 and Ser46. An LR motif motif is present at residues 60–78; it reads TKIKQSSRAKCLAKRKIAQ. Residues Lys75 and Lys90 each participate in a glycyl lysine isopeptide (Lys-Gly) (interchain with G-Cter in SUMO2) cross-link. The 20-residue stretch at 80-99 folds into the UIM 1 domain; sequence TEEEQFALALKMSEQEAREV. Residues 93–204 are disordered; the sequence is EQEAREVNSQ…SVSSGSWDQS (112 aa). The tract at residues 97 to 103 is UIM-linker; the sequence is REVNSQE. The tract at residues 100–200 is necessary for interaction with NR6A1 N-terminus; the sequence is NSQEEEEEEL…EEPVSVSSGS (101 aa). The residue at position 101 (Ser101) is a Phosphoserine. In terms of domain architecture, UIM 2 spans 105–124; sequence EEEELLRKAIAESLNSCRPS. The segment covering 117–130 has biased composition (polar residues); sequence SLNSCRPSDASATR. Ser140 carries the post-translational modification Phosphoserine. Positions 194–204 are enriched in low complexity; it reads VSVSSGSWDQS. Ser205 is modified (phosphoserine). Lys245 is covalently cross-linked (Glycyl lysine isopeptide (Lys-Gly) (interchain with G-Cter in SUMO2)). Residues 270–400 form an AIR region; it reads TGGTVNYFWG…EEEPTTSHGQ (131 aa). Residues 334–369 form a disordered region; sequence NECGQGEQASEKNEGISEDMGDEDKEERQESRASVW. Residues 349-358 are compositionally biased toward acidic residues; that stretch reads ISEDMGDEDK. Residues Lys382 and Lys387 each participate in a glycyl lysine isopeptide (Lys-Gly) (interchain with G-Cter in SUMO2) cross-link. Residues 391–418 form a disordered region; that stretch reads EEEPTTSHGQSSQGLFVEETSEEGNSVP. Residues 400–500 form a necessary for interaction with NR6A1 C-terminus region; it reads QSSQGLFVEE…EIHTSTFSSS (101 aa). Phosphoserine is present on residues Ser402 and Ser420. Lys429 is covalently cross-linked (Glycyl lysine isopeptide (Lys-Gly) (interchain with G-Cter in SUMO2)). Residue Ser467 is modified to Phosphoserine. The UBZ4-type zinc finger occupies 502-529; sequence QVSCPLCDQGFPPTKIERHAMYCNGLMG. Positions 505, 508, 520, and 524 each coordinate Zn(2+). Residues 505-582 are zinc-finger-like region; that stretch reads CPLCDQGFPP…REYQCHVESC (78 aa). Glycyl lysine isopeptide (Lys-Gly) (interchain with G-Cter in SUMO2) cross-links involve residues Lys544, Lys559, Lys562, and Lys607. Phosphoserine is present on Ser627. Glycyl lysine isopeptide (Lys-Gly) (interchain with G-Cter in SUMO2) cross-links involve residues Lys635 and Lys642. Residues Ser655 and Ser679 each carry the phosphoserine modification. Glycyl lysine isopeptide (Lys-Gly) (interchain with G-Cter in SUMO2) cross-links involve residues Lys698 and Lys699.

It belongs to the RAP80 family. In terms of assembly, component of the ARISC complex, at least composed of UIMC1/RAP80, ABRAXAS1, BRCC3/BRCC36, BABAM2 and BABAM1/NBA1. Component of the BRCA1-A complex, at least composed of the BRCA1, BARD1, UIMC1/RAP80, ABRAXAS1, BRCC3/BRCC36, BABAM2 and BABAM1/NBA1. In the BRCA1-A complex, interacts directly with ABRAXAS1. Interacts with UBE2I. Interacts with NR6A1. Interacts with ESR1. Interacts with TSP57. Interacts with TRAIP. Post-translationally, sumoylated. Phosphorylated upon DNA damage by ATM or ATR.

Its subcellular location is the nucleus. In terms of biological role, ubiquitin-binding protein. Specifically recognizes and binds 'Lys-63'-linked ubiquitin. Plays a central role in the BRCA1-A complex by specifically binding 'Lys-63'-linked ubiquitinated histones H2A and H2AX at DNA lesions sites, leading to target the BRCA1-BARD1 heterodimer to sites of DNA damage at double-strand breaks (DSBs). The BRCA1-A complex also possesses deubiquitinase activity that specifically removes 'Lys-63'-linked ubiquitin on histones H2A and H2AX. Also weakly binds monoubiquitin but with much less affinity than 'Lys-63'-linked ubiquitin. May interact with monoubiquitinated histones H2A and H2B; the relevance of such results is however unclear in vivo. Does not bind Lys-48'-linked ubiquitin. May indirectly act as a transcriptional repressor by inhibiting the interaction of NR6A1 with the corepressor NCOR1. The sequence is that of BRCA1-A complex subunit RAP80 (UIMC1) from Sus scrofa (Pig).